Here is a 671-residue protein sequence, read N- to C-terminus: DNA ligase (671 aa).

Residues 32–36 (DAEYD), 81–82 (SL), and E113 each bind NAD(+). The active-site N6-AMP-lysine intermediate is the K115. Residues R136, E173, K290, and K314 each contribute to the NAD(+) site. 4 residues coordinate Zn(2+): C408, C411, C426, and C432. A BRCT domain is found at 593-671 (EIDSPFAGKT…EAEMMRLLGE (79 aa)).

This sequence belongs to the NAD-dependent DNA ligase family. LigA subfamily. It depends on Mg(2+) as a cofactor. Mn(2+) is required as a cofactor.

It catalyses the reaction NAD(+) + (deoxyribonucleotide)n-3'-hydroxyl + 5'-phospho-(deoxyribonucleotide)m = (deoxyribonucleotide)n+m + AMP + beta-nicotinamide D-nucleotide.. Its function is as follows. DNA ligase that catalyzes the formation of phosphodiester linkages between 5'-phosphoryl and 3'-hydroxyl groups in double-stranded DNA using NAD as a coenzyme and as the energy source for the reaction. It is essential for DNA replication and repair of damaged DNA. This chain is DNA ligase, found in Klebsiella pneumoniae subsp. pneumoniae (strain ATCC 700721 / MGH 78578).